The primary structure comprises 127 residues: Fluoride-specific ion channel FluC (127 aa).

4 helical membrane passes run 4–24 (LLLA…LLSM), 35–55 (LGTL…FAWF), 71–91 (TGFC…VFLL), and 103–123 (VFVN…LFSA). Na(+) contacts are provided by glycine 75 and threonine 78.

Belongs to the fluoride channel Fluc/FEX (TC 1.A.43) family.

The protein localises to the cell inner membrane. It carries out the reaction fluoride(in) = fluoride(out). With respect to regulation, na(+) is not transported, but it plays an essential structural role and its presence is essential for fluoride channel function. Its function is as follows. Fluoride-specific ion channel. Important for reducing fluoride concentration in the cell, thus reducing its toxicity. The polypeptide is Fluoride-specific ion channel FluC (Escherichia coli (strain K12 / MC4100 / BW2952)).